The primary structure comprises 387 residues: Exodeoxyribonuclease 7 large subunit (387 aa).

It belongs to the XseA family. In terms of assembly, heterooligomer composed of large and small subunits.

The protein resides in the cytoplasm. It catalyses the reaction Exonucleolytic cleavage in either 5'- to 3'- or 3'- to 5'-direction to yield nucleoside 5'-phosphates.. Its function is as follows. Bidirectionally degrades single-stranded DNA into large acid-insoluble oligonucleotides, which are then degraded further into small acid-soluble oligonucleotides. This is Exodeoxyribonuclease 7 large subunit from Parasynechococcus marenigrum (strain WH8102).